We begin with the raw amino-acid sequence, 699 residues long: Transcription factor MYC2 (699 aa).

The tract at residues 25 to 60 (PWGAASTPPPPPPPPHHHHQQQQQQVLPPPAAAPAA) is disordered. The interval 93–158 (IDVSTGASLL…AAPDEAVEEE (66 aa)) is JAZ-interaction domain. Residues 290-530 (DISVSKPPPP…EPLNHVEAER (241 aa)) form a disordered region. Positions 306-321 (HFENGSTSTLTENPSP) are enriched in polar residues. Composition is skewed to low complexity over residues 335-349 (PQRQQQQQQSSQAQQ) and 387-412 (SSSGRRNPSPAPPAATASLTTAPGSL). 2 stretches are compositionally biased toward polar residues: residues 413–449 (FSQHTPTLTAAANDAKSNNQKRSMEATSRASNTNNHP) and 459–472 (SFSSAPTTRPSTGT). Over residues 478-494 (SESDHSDLEASVREVES) the composition is skewed to basic and acidic residues. The Nuclear localization signal signature appears at 506 to 514 (KRPRKRGRK). The span at 507–516 (RPRKRGRKPA) shows a compositional bias: basic residues. Basic and acidic residues predominate over residues 517-530 (NGREEPLNHVEAER). The interval 520–533 (EEPLNHVEAERQRR) is basic motif; degenerate. The bHLH domain occupies 520–569 (EEPLNHVEAERQRREKLNQRFYALRAVVPNVSKMDKASLLGDAISYINEL). A helix-loop-helix motif region spans residues 534-569 (EKLNQRFYALRAVVPNVSKMDKASLLGDAISYINEL). A disordered region spans residues 582–611 (TLQSQMESLKKERDARPPAPSGGGGDGGAR).

It belongs to the bHLH protein family. Interacts with TIFY3/JAZ1. Highly expressed in spikelets and floral organs.

Its subcellular location is the nucleus. Its function is as follows. Transcriptional activator involved in jasmonate (JA) signaling pathway during spikelet development. Binds to the G2 region G-box (5'-CACGTG-3') of the MADS1 promoter and thus directly regulates the expression of MADS1. Its function in MADS1 activation is abolished by TIFY3/JAZ1 which directly target MYC2 during spikelet development. This is Transcription factor MYC2 from Oryza sativa subsp. japonica (Rice).